We begin with the raw amino-acid sequence, 159 residues long: ATP synthase subunit b (159 aa).

Residues 8–28 (ILATIINFIILILILKHFFWD) traverse the membrane as a helical segment.

This sequence belongs to the ATPase B chain family. As to quaternary structure, F-type ATPases have 2 components, F(1) - the catalytic core - and F(0) - the membrane proton channel. F(1) has five subunits: alpha(3), beta(3), gamma(1), delta(1), epsilon(1). F(0) has three main subunits: a(1), b(2) and c(10-14). The alpha and beta chains form an alternating ring which encloses part of the gamma chain. F(1) is attached to F(0) by a central stalk formed by the gamma and epsilon chains, while a peripheral stalk is formed by the delta and b chains.

The protein localises to the cell membrane. Functionally, f(1)F(0) ATP synthase produces ATP from ADP in the presence of a proton or sodium gradient. F-type ATPases consist of two structural domains, F(1) containing the extramembraneous catalytic core and F(0) containing the membrane proton channel, linked together by a central stalk and a peripheral stalk. During catalysis, ATP synthesis in the catalytic domain of F(1) is coupled via a rotary mechanism of the central stalk subunits to proton translocation. In terms of biological role, component of the F(0) channel, it forms part of the peripheral stalk, linking F(1) to F(0). The protein is ATP synthase subunit b of Clostridium perfringens (strain SM101 / Type A).